The chain runs to 530 residues: MSEESGSFGGWFSSWFNTSKDQESSSNLIQQQQPGTNYARNQQTLSSLRSQKQQAESSKEDTRNSPGKLVRTDTESYLDAPKTQQANNNRKVTRRLPLTNNNLVIDCPIPDRLLGALNCTERDEFSQLRYTAATCEPDDFELEGYTLRPKIYNRETELFIEDEILFTRTMHGVMKNIAHLCSLKKNSVWGPDGWKKVVVCIVADGRKVVNKRVLNVLASMGIYQAGIAKNIVDNKPVKAHIYEYTTQISIDSDMNIKGSDKGIVPVQTIFCLKEKNAKKINSHRWFFNAFGPILQPNVCILLDVGTRPGNSSIYQLWKVFHRNPLIGGACGEIRAMLGTACCQLINPLVAAQNFEYKMSNILDKPLESVFGYISVLPGAFSAYRYAALKNDVSGQGPLEKYFLGEDLHKDQHTGKKAGLFEANMYLAEDRILCFELVAKKDERWLLQYVDSAFGETDVPSQLPEFISQRRRWLNGSFFAGVYGLIHFSKIWNSGHGFSRTFLLLIEGIYNVISLIFSWFSVVIVLSFLCT.

N17 carries N-linked (GlcNAc...) asparagine glycosylation. Positions 22–94 are disordered; the sequence is QESSSNLIQQ…QANNNRKVTR (73 aa). Residues 24-56 show a composition bias toward polar residues; the sequence is SSSNLIQQQQPGTNYARNQQTLSSLRSQKQQAE. Residues N118, N310, and N474 are each glycosylated (N-linked (GlcNAc...) asparagine). A run of 2 helical transmembrane segments spans residues 477 to 497 and 508 to 528; these read FFAG…GHGF and IYNV…LSFL.

Belongs to the chitin synthase family. Class II subfamily.

It is found in the cell membrane. It catalyses the reaction [(1-&gt;4)-N-acetyl-beta-D-glucosaminyl](n) + UDP-N-acetyl-alpha-D-glucosamine = [(1-&gt;4)-N-acetyl-beta-D-glucosaminyl](n+1) + UDP + H(+). Polymerizes chitin, a structural polymer of the cell wall and septum, by transferring the sugar moiety of UDP-GlcNAc to the non-reducing end of the growing chitin polymer. The chain is Chitin synthase 1 from Rhizopus delemar (strain RA 99-880 / ATCC MYA-4621 / FGSC 9543 / NRRL 43880) (Mucormycosis agent).